The sequence spans 284 residues: Polyamine aminopropyltransferase (284 aa).

In terms of domain architecture, PABS spans 2–237 (ELWYTEKHTE…GHWLFGFASK (236 aa)). Q31 lines the S-methyl-5'-thioadenosine pocket. 2 residues coordinate spermidine: H62 and D86. Residues E106 and 137 to 138 (DG) each bind S-methyl-5'-thioadenosine. D155 (proton acceptor) is an active-site residue. 155–158 (DSTD) lines the spermidine pocket. P162 is a binding site for S-methyl-5'-thioadenosine.

It belongs to the spermidine/spermine synthase family. In terms of assembly, homodimer or homotetramer.

It is found in the cytoplasm. It carries out the reaction S-adenosyl 3-(methylsulfanyl)propylamine + putrescine = S-methyl-5'-thioadenosine + spermidine + H(+). The protein operates within amine and polyamine biosynthesis; spermidine biosynthesis; spermidine from putrescine: step 1/1. In terms of biological role, catalyzes the irreversible transfer of a propylamine group from the amino donor S-adenosylmethioninamine (decarboxy-AdoMet) to putrescine (1,4-diaminobutane) to yield spermidine. This Clostridium botulinum (strain Alaska E43 / Type E3) protein is Polyamine aminopropyltransferase.